The chain runs to 187 residues: ATP synthase subunit b (187 aa).

The helical transmembrane segment at 32–52 threads the bilayer; the sequence is NILDTNLINLAIIITVLFVFG.

This sequence belongs to the ATPase B chain family. In terms of assembly, F-type ATPases have 2 components, F(1) - the catalytic core - and F(0) - the membrane proton channel. F(1) has five subunits: alpha(3), beta(3), gamma(1), delta(1), epsilon(1). F(0) has four main subunits: a(1), b(1), b'(1) and c(10-14). The alpha and beta chains form an alternating ring which encloses part of the gamma chain. F(1) is attached to F(0) by a central stalk formed by the gamma and epsilon chains, while a peripheral stalk is formed by the delta, b and b' chains.

Its subcellular location is the cellular thylakoid membrane. Functionally, f(1)F(0) ATP synthase produces ATP from ADP in the presence of a proton or sodium gradient. F-type ATPases consist of two structural domains, F(1) containing the extramembraneous catalytic core and F(0) containing the membrane proton channel, linked together by a central stalk and a peripheral stalk. During catalysis, ATP synthesis in the catalytic domain of F(1) is coupled via a rotary mechanism of the central stalk subunits to proton translocation. Its function is as follows. Component of the F(0) channel, it forms part of the peripheral stalk, linking F(1) to F(0). The polypeptide is ATP synthase subunit b (Trichormus variabilis (strain ATCC 29413 / PCC 7937) (Anabaena variabilis)).